Reading from the N-terminus, the 158-residue chain is Succinate dehydrogenase assembly factor 2, mitochondrial (158 aa).

A mitochondrion-targeting transit peptide spans 1 to 17 (MFSANIARKVVCSVCRA).

This sequence belongs to the SDHAF2 family. Interacts with sdha within the SDH catalytic dimer.

Its subcellular location is the mitochondrion matrix. Functionally, plays an essential role in the assembly of succinate dehydrogenase (SDH), an enzyme complex (also referred to as respiratory complex II) that is a component of both the tricarboxylic acid (TCA) cycle and the mitochondrial electron transport chain, and which couples the oxidation of succinate to fumarate with the reduction of ubiquinone (coenzyme Q) to ubiquinol. Required for flavinylation (covalent attachment of FAD) of the flavoprotein subunit sdha of the SDH catalytic dimer. The chain is Succinate dehydrogenase assembly factor 2, mitochondrial from Danio rerio (Zebrafish).